Reading from the N-terminus, the 455-residue chain is ATP-dependent protease ATPase subunit HslU (455 aa).

ATP is bound by residues Val23, 65-70 (GVGKTE), Asp266, Glu333, and Arg405.

This sequence belongs to the ClpX chaperone family. HslU subfamily. A double ring-shaped homohexamer of HslV is capped on each side by a ring-shaped HslU homohexamer. The assembly of the HslU/HslV complex is dependent on binding of ATP.

Its subcellular location is the cytoplasm. Its function is as follows. ATPase subunit of a proteasome-like degradation complex; this subunit has chaperone activity. The binding of ATP and its subsequent hydrolysis by HslU are essential for unfolding of protein substrates subsequently hydrolyzed by HslV. HslU recognizes the N-terminal part of its protein substrates and unfolds these before they are guided to HslV for hydrolysis. The chain is ATP-dependent protease ATPase subunit HslU from Xanthomonas oryzae pv. oryzae (strain MAFF 311018).